Reading from the N-terminus, the 269-residue chain is Chymotrypsin-like elastase family member 2A (269 aa).

An N-terminal signal peptide occupies residues 1–16; that stretch reads MIRTLLLSTLVAGALS. A propeptide spans 17-28 (activation peptide); it reads CGDPTYPPYVTR. The region spanning 29–267 is the Peptidase S1 domain; that stretch reads VVGGEEARPN…YIDWINSVIA (239 aa). Cysteines 58 and 74 form a disulfide. Catalysis depends on charge relay system residues His-73 and Asp-121. 3 disulfides stabilise this stretch: Cys-155/Cys-222, Cys-186/Cys-202, and Cys-212/Cys-243. The Charge relay system role is filled by Ser-216.

Belongs to the peptidase S1 family. Elastase subfamily. As to quaternary structure, interacts with CPA1. Interacts with SERPINA1. As to expression, expressed in pancreas. Not detected in keratinocytes. Detected in exocrine secretions of the pancreas (at protein level). Also expressed in a small fraction of cells in pancreatic islets, adrenal cortex, intestinal glands and colonic lymphoid follicles (at protein level). Detected in plasma.

The protein localises to the secreted. It carries out the reaction Preferential cleavage: Leu-|-Xaa, Met-|-Xaa and Phe-|-Xaa. Hydrolyzes elastin.. Functionally, elastase that enhances insulin signaling and might have a physiologic role in cellular glucose metabolism. Circulates in plasma and reduces platelet hyperactivation, triggers both insulin secretion and degradation, and increases insulin sensitivity. The polypeptide is Chymotrypsin-like elastase family member 2A (Homo sapiens (Human)).